The primary structure comprises 451 residues: Cobalamin reductase PduS (451 aa).

4Fe-4S ferredoxin-type domains are found at residues 255–284 and 300–330; these read TVLSVARTVCEQCRLCTDLCPRHLIGHELS and PQLLLSALTCSECNVCESVACPVGISPMRIN. The [4Fe-4S] cluster site is built by Cys264, Cys267, Cys270, Cys274, Cys309, Cys312, Cys315, and Cys320.

It belongs to the PduS cobalamin reductase family. In terms of assembly, monomeric when purified anaerobically, dimeric under aerobic conditions. Forms a complex with PduO. Interacts with PduT, probably via the N-terminus of PduS. The cofactor is [4Fe-4S] cluster. FMN is required as a cofactor.

It is found in the bacterial microcompartment. Its pathway is polyol metabolism; 1,2-propanediol degradation. In terms of biological role, a protein that aids in conversion of cob(III)alamin to cob(II)alamin and then to cob(I)alamin in the bacterial microcompartment (BMC) dedicated to 1,2-propanediol (1,2-PD) degradation. The latter step requires PduO. No free cob(I)alamin is released, suggesting a complex is formed with PduO that finishes conversion to adenosylcobalamin. PduS and PduO allow regeneration of the adenosylcobalamin cofactor within the BMC. Another study showed reduction of cob(II)alamin to cob(I)alamin in the absence of PduO. Both reactions require NADH. Cyanocobalamin (CN-Cbl) is not a substrate for the first reaction. Cobalamin reduction probably occurs spontaneously in the presence of free reduced flavin nucleotides, this protein may be involved in electron transfer for this reduction. The 1,2-PD-specific bacterial microcompartment (BMC) concentrates low levels of 1,2-PD catabolic enzymes, concentrates volatile reaction intermediates thus enhancing pathway flux and keeps the level of toxic, mutagenic propionaldehyde low. This Salmonella typhimurium (strain LT2 / SGSC1412 / ATCC 700720) protein is Cobalamin reductase PduS.